Here is a 346-residue protein sequence, read N- to C-terminus: 4-hydroxy-2-oxovalerate aldolase 2 (346 aa).

Residues 8–258 (VTLVDTTLRD…HTGVELFPLI (251 aa)) enclose the Pyruvate carboxyltransferase domain. Residues 16–17 (RD), S170, and H197 contribute to the substrate site. Position 17 (D17) interacts with Mn(2+). Residues H197 and H199 each contribute to the Mn(2+) site. Y288 is a binding site for substrate.

Belongs to the 4-hydroxy-2-oxovalerate aldolase family.

It carries out the reaction (S)-4-hydroxy-2-oxopentanoate = acetaldehyde + pyruvate. The sequence is that of 4-hydroxy-2-oxovalerate aldolase 2 from Nocardia farcinica (strain IFM 10152).